We begin with the raw amino-acid sequence, 410 residues long: Benzene 1,2-dioxygenase system ferredoxin--NAD(+) reductase subunit (410 aa).

Position 4–35 (4–35) interacts with FAD; the sequence is HVAIIGNGVAGFTTAQALRAEGYEGRISLIGE. 145-173 lines the NAD(+) pocket; it reads RLLIVGGGLIGCEVATTARKLGLSVTILE.

This sequence belongs to the bacterial ring-hydroxylating dioxygenase ferredoxin reductase family. In terms of assembly, this dioxygenase system consists of four proteins: the two subunits of the hydroxylase component (BedC1 and BedC2), a ferredoxin (BedB) and a ferredoxin reductase (BedA). Requires FAD as cofactor.

The catalysed reaction is 2 reduced [2Fe-2S]-[ferredoxin] + NAD(+) + H(+) = 2 oxidized [2Fe-2S]-[ferredoxin] + NADH. It participates in aromatic compound metabolism; benzene degradation; catechol from benzene: step 1/2. Part of the electron transfer component of benzene 1,2-dioxygenase, transfers electrons from ferredoxin to NADH. In Pseudomonas putida (Arthrobacter siderocapsulatus), this protein is Benzene 1,2-dioxygenase system ferredoxin--NAD(+) reductase subunit (bedA).